Consider the following 414-residue polypeptide: Isocitrate dehydrogenase [NADP] cytoplasmic (414 aa).

Ser2 bears the N-acetylserine mark. Position 42 is a phosphotyrosine (Tyr42). Residue 75-77 (TIT) coordinates NADP(+). Thr77 contacts substrate. N6-acetyllysine is present on Lys81. NADP(+) is bound at residue Arg82. Substrate contacts are provided by residues 94–100 (SPNGTIR) and Arg109. Lys126 carries the post-translational modification N6-succinyllysine. 2 residues coordinate substrate: Arg132 and Lys212. N6-acetyllysine occurs at positions 224 and 233. Asp252 serves as a coordination point for Mn(2+). Lys260 is a binding site for NADP(+). Residues Asp275 and Asp279 each coordinate Mn(2+). 310–315 (GTVTRH) is an NADP(+) binding site. An N6-acetyllysine modification is found at Lys321. Asn328 provides a ligand contact to NADP(+). Phosphoserine is present on Ser389. Residue Lys400 is modified to N6-succinyllysine.

Belongs to the isocitrate and isopropylmalate dehydrogenases family. As to quaternary structure, homodimer. Mg(2+) is required as a cofactor. Mn(2+) serves as cofactor. Acetylation at Lys-374 dramatically reduces catalytic activity.

Its subcellular location is the cytoplasm. It is found in the cytosol. The catalysed reaction is D-threo-isocitrate + NADP(+) = 2-oxoglutarate + CO2 + NADPH. Functionally, catalyzes the NADP(+)-dependent oxidative decarboxylation of isocitrate (D-threo-isocitrate) to 2-ketoglutarate (2-oxoglutarate), which is required by other enzymes such as the phytanoyl-CoA dioxygenase. Plays a critical role in the generation of NADPH, an important cofactor in many biosynthesis pathways. May act as a corneal epithelial crystallin and may be involved in maintaining corneal epithelial transparency. This Ovis aries (Sheep) protein is Isocitrate dehydrogenase [NADP] cytoplasmic (IDH1).